Here is a 124-residue protein sequence, read N- to C-terminus: Hydrogenase maturation factor HypA (124 aa).

Residue His-2 participates in Ni(2+) binding. Residues Cys-78, Cys-81, Cys-97, and Cys-100 each coordinate Zn(2+).

This sequence belongs to the HypA/HybF family.

Involved in the maturation of [NiFe] hydrogenases. Required for nickel insertion into the metal center of the hydrogenase. This is Hydrogenase maturation factor HypA from Methanocaldococcus jannaschii (strain ATCC 43067 / DSM 2661 / JAL-1 / JCM 10045 / NBRC 100440) (Methanococcus jannaschii).